Reading from the N-terminus, the 434-residue chain is ATP phosphoribosyltransferase regulatory subunit (434 aa).

The protein belongs to the class-II aminoacyl-tRNA synthetase family. HisZ subfamily. As to quaternary structure, heteromultimer composed of HisG and HisZ subunits.

It localises to the cytoplasm. It participates in amino-acid biosynthesis; L-histidine biosynthesis; L-histidine from 5-phospho-alpha-D-ribose 1-diphosphate: step 1/9. Functionally, required for the first step of histidine biosynthesis. May allow the feedback regulation of ATP phosphoribosyltransferase activity by histidine. The sequence is that of ATP phosphoribosyltransferase regulatory subunit from Geobacter metallireducens (strain ATCC 53774 / DSM 7210 / GS-15).